Here is a 37-residue protein sequence, read N- to C-terminus: Large ribosomal subunit protein bL36c (37 aa).

This sequence belongs to the bacterial ribosomal protein bL36 family.

The protein resides in the plastid. Its subcellular location is the chloroplast. The chain is Large ribosomal subunit protein bL36c from Chara vulgaris (Common stonewort).